The sequence spans 462 residues: Siroheme synthase (462 aa).

The tract at residues 1–203 (MEYLPLFANL…GKWEHAEKEI (203 aa)) is precorrin-2 dehydrogenase /sirohydrochlorin ferrochelatase. Residues 22 to 23 (NV) and 43 to 44 (DD) contribute to the NAD(+) site. Serine 128 carries the post-translational modification Phosphoserine. A uroporphyrinogen-III C-methyltransferase region spans residues 215-462 (GNVALVGAGP…NWFGKIIKEQ (248 aa)). Proline 224 contributes to the S-adenosyl-L-methionine binding site. The active-site Proton acceptor is the aspartate 247. Lysine 269 acts as the Proton donor in catalysis. S-adenosyl-L-methionine-binding positions include 300–302 (GGD), isoleucine 305, 330–331 (TA), methionine 383, and glycine 412.

The protein in the N-terminal section; belongs to the precorrin-2 dehydrogenase / sirohydrochlorin ferrochelatase family. In the C-terminal section; belongs to the precorrin methyltransferase family.

It catalyses the reaction uroporphyrinogen III + 2 S-adenosyl-L-methionine = precorrin-2 + 2 S-adenosyl-L-homocysteine + H(+). The enzyme catalyses precorrin-2 + NAD(+) = sirohydrochlorin + NADH + 2 H(+). The catalysed reaction is siroheme + 2 H(+) = sirohydrochlorin + Fe(2+). The protein operates within cofactor biosynthesis; adenosylcobalamin biosynthesis; precorrin-2 from uroporphyrinogen III: step 1/1. It functions in the pathway cofactor biosynthesis; adenosylcobalamin biosynthesis; sirohydrochlorin from precorrin-2: step 1/1. Its pathway is porphyrin-containing compound metabolism; siroheme biosynthesis; precorrin-2 from uroporphyrinogen III: step 1/1. It participates in porphyrin-containing compound metabolism; siroheme biosynthesis; siroheme from sirohydrochlorin: step 1/1. The protein operates within porphyrin-containing compound metabolism; siroheme biosynthesis; sirohydrochlorin from precorrin-2: step 1/1. In terms of biological role, multifunctional enzyme that catalyzes the SAM-dependent methylations of uroporphyrinogen III at position C-2 and C-7 to form precorrin-2 via precorrin-1. Then it catalyzes the NAD-dependent ring dehydrogenation of precorrin-2 to yield sirohydrochlorin. Finally, it catalyzes the ferrochelation of sirohydrochlorin to yield siroheme. The protein is Siroheme synthase of Baumannia cicadellinicola subsp. Homalodisca coagulata.